A 437-amino-acid chain; its full sequence is Protein WVD2-like 5 (437 aa).

3 disordered regions span residues 1–22, 38–210, and 254–437; these read MDPE…GGLA, TVDT…FSFK, and LRKS…AVEH. The segment covering 41–55 has biased composition (low complexity); the sequence is TTSESQNENSANSST. A compositionally biased stretch (basic and acidic residues) spans 58–86; that stretch reads TIEHVKEAAEGTQVEHVDDSKCMKGEKAQ. The segment covering 121 to 140 has biased composition (polar residues); the sequence is SNGSVAPNVQTTNPLKSKSF. Positions 151-167 are enriched in basic and acidic residues; that stretch reads GKHDSAPAESADGEKVK. The residue at position 208 (Ser-208) is a Phosphoserine. Positions 288–297 are enriched in basic residues; sequence KSPKLGRKKT. Residues 360 to 371 are compositionally biased toward low complexity; sequence PAPAKAAIIPAK. A compositionally biased stretch (basic and acidic residues) spans 408–437; that stretch reads EDSHETVSPRMNEDRADKSIEVSEAVAVEH. Phosphoserine is present on Ser-415.

The protein belongs to the TPX2 family. As to expression, expressed in seedlings.

It localises to the cytoplasm. It is found in the cytoskeleton. Microtubule-associated protein (MAP) that regulates the orientation of interphase cortical microtubules. The protein is Protein WVD2-like 5 of Arabidopsis thaliana (Mouse-ear cress).